A 230-amino-acid chain; its full sequence is Ribose-5-phosphate isomerase A (230 aa).

Substrate is bound by residues 29 to 32, 86 to 89, and 99 to 102; these read SGST, DGAD, and KGGG. Glu108 serves as the catalytic Proton acceptor. Position 126 (Lys126) interacts with substrate.

It belongs to the ribose 5-phosphate isomerase family. As to quaternary structure, homodimer.

The catalysed reaction is aldehydo-D-ribose 5-phosphate = D-ribulose 5-phosphate. Its pathway is carbohydrate degradation; pentose phosphate pathway; D-ribose 5-phosphate from D-ribulose 5-phosphate (non-oxidative stage): step 1/1. Catalyzes the reversible conversion of ribose-5-phosphate to ribulose 5-phosphate. The polypeptide is Ribose-5-phosphate isomerase A (Desulfatibacillum aliphaticivorans).